The chain runs to 208 residues: N-(5'-phosphoribosyl)anthranilate isomerase (208 aa).

It belongs to the TrpF family.

The enzyme catalyses N-(5-phospho-beta-D-ribosyl)anthranilate = 1-(2-carboxyphenylamino)-1-deoxy-D-ribulose 5-phosphate. The protein operates within amino-acid biosynthesis; L-tryptophan biosynthesis; L-tryptophan from chorismate: step 3/5. The sequence is that of N-(5'-phosphoribosyl)anthranilate isomerase from Chlamydia trachomatis serovar A (strain ATCC VR-571B / DSM 19440 / HAR-13).